Consider the following 388-residue polypeptide: Xylose isomerase (388 aa).

Active-site residues include histidine 54 and aspartate 57. Residues glutamate 181, glutamate 217, histidine 220, aspartate 245, aspartate 255, aspartate 257, and aspartate 287 each contribute to the Mg(2+) site.

This sequence belongs to the xylose isomerase family. As to quaternary structure, homotetramer. Requires Mg(2+) as cofactor.

The protein resides in the cytoplasm. It carries out the reaction alpha-D-xylose = alpha-D-xylulofuranose. Functionally, involved in D-xylose catabolism. This chain is Xylose isomerase (xylA), found in Streptomyces murinus.